The chain runs to 363 residues: Flagellar P-ring protein (363 aa).

An N-terminal signal peptide occupies residues 1 to 20 (MKYRLIVALAMLVLSLPSQA).

Belongs to the FlgI family. The basal body constitutes a major portion of the flagellar organelle and consists of four rings (L,P,S, and M) mounted on a central rod.

It localises to the periplasm. It is found in the bacterial flagellum basal body. Functionally, assembles around the rod to form the L-ring and probably protects the motor/basal body from shearing forces during rotation. This Shewanella sp. (strain ANA-3) protein is Flagellar P-ring protein.